The primary structure comprises 312 residues: Apolipoprotein E (312 aa).

Residues 1–18 (MKALWAVLLATLLTGCLA) form the signal peptide. 8 consecutive repeat copies span residues 72 to 93 (VLME…EQLG), 94 to 115 (PVAE…ARLG), 116 to 137 (ADME…TMLG), 138 to 159 (QNTE…KRLM), 160 to 181 (RDAE…EGAE), 182 to 203 (RGVS…QRTA), 204 to 225 (NLGA…ERLR), and 226 to 247 (GRLE…EHME). The 8 X 22 AA approximate tandem repeats stretch occupies residues 72-247 (VLMEDTMTEV…RLEEMREHME (176 aa)). Methionine 135 is modified (methionine sulfoxide). The tract at residues 150-160 (HLRKMRKRLMR) is LDL and other lipoprotein receptors binding. The segment at 150-160 (HLRKMRKRLMR) is LDL receptor binding. 154-157 (MRKR) lines the heparin pocket. Residues 202-282 (TANLGAGAAQ…SWFEPLVEDM (81 aa)) are lipid-binding and lipoprotein association. Heparin is bound at residue 221–228 (SERLRGRL). The segment at 258–312 (QQIRLQAEIFQARLKSWFEPLVEDMHRQLANLVEKIQSSVATNSVLSTSVPQENQ) is homooligomerization. Residues 270–282 (RLKSWFEPLVEDM) are specificity for association with VLDL.

Belongs to the apolipoprotein A1/A4/E family. In terms of assembly, homotetramer. May interact with ABCA1; functionally associated with ABCA1 in the biogenesis of HDLs. May interact with APP/A4 amyloid-beta peptide; the interaction is extremely stable in vitro but its physiological significance is unclear. May interact with MAPT. May interact with MAP2. In the cerebrospinal fluid, interacts with secreted SORL1. Interacts with PMEL; this allows the loading of PMEL luminal fragment on ILVs to induce fibril nucleation. Post-translationally, APOE exists as multiple glycosylated and sialylated glycoforms within cells and in plasma. The extent of glycosylation and sialylation are tissue and context specific. In terms of processing, glycated in plasma VLDL. Phosphorylated by FAM20C in the extracellular medium.

Its subcellular location is the secreted. It is found in the extracellular space. It localises to the extracellular matrix. The protein resides in the extracellular vesicle. The protein localises to the endosome. Its subcellular location is the multivesicular body. Functionally, APOE is an apolipoprotein, a protein associating with lipid particles, that mainly functions in lipoprotein-mediated lipid transport between organs via the plasma and interstitial fluids. APOE is a core component of plasma lipoproteins and is involved in their production, conversion and clearance. Apolipoproteins are amphipathic molecules that interact both with lipids of the lipoprotein particle core and the aqueous environment of the plasma. As such, APOE associates with chylomicrons, chylomicron remnants, very low density lipoproteins (VLDL) and intermediate density lipoproteins (IDL) but shows a preferential binding to high-density lipoproteins (HDL). It also binds a wide range of cellular receptors including the LDL receptor/LDLR, the LDL receptor-related proteins LRP1, LRP2 and LRP8 and the very low-density lipoprotein receptor/VLDLR that mediate the cellular uptake of the APOE-containing lipoprotein particles. Finally, APOE also has a heparin-binding activity and binds heparan-sulfate proteoglycans on the surface of cells, a property that supports the capture and the receptor-mediated uptake of APOE-containing lipoproteins by cells. A main function of APOE is to mediate lipoprotein clearance through the uptake of chylomicrons, VLDLs, and HDLs by hepatocytes. APOE is also involved in the biosynthesis by the liver of VLDLs as well as their uptake by peripheral tissues ensuring the delivery of triglycerides and energy storage in muscle, heart and adipose tissues. By participating in the lipoprotein-mediated distribution of lipids among tissues, APOE plays a critical role in plasma and tissues lipid homeostasis. APOE is also involved in two steps of reverse cholesterol transport, the HDLs-mediated transport of cholesterol from peripheral tissues to the liver, and thereby plays an important role in cholesterol homeostasis. First, it is functionally associated with ABCA1 in the biogenesis of HDLs in tissues. Second, it is enriched in circulating HDLs and mediates their uptake by hepatocytes. APOE also plays an important role in lipid transport in the central nervous system, regulating neuron survival and sprouting. This Arvicanthis niloticus (African grass rat) protein is Apolipoprotein E (Apoe).